We begin with the raw amino-acid sequence, 124 residues long: Large ribosomal subunit protein bL19 (124 aa).

Belongs to the bacterial ribosomal protein bL19 family.

Its function is as follows. This protein is located at the 30S-50S ribosomal subunit interface and may play a role in the structure and function of the aminoacyl-tRNA binding site. The protein is Large ribosomal subunit protein bL19 of Zymomonas mobilis subsp. mobilis (strain ATCC 31821 / ZM4 / CP4).